The sequence spans 364 residues: Cobalt-precorrin-5B C(1)-methyltransferase (364 aa).

This sequence belongs to the CbiD family.

The enzyme catalyses Co-precorrin-5B + S-adenosyl-L-methionine = Co-precorrin-6A + S-adenosyl-L-homocysteine. The protein operates within cofactor biosynthesis; adenosylcobalamin biosynthesis; cob(II)yrinate a,c-diamide from sirohydrochlorin (anaerobic route): step 6/10. Catalyzes the methylation of C-1 in cobalt-precorrin-5B to form cobalt-precorrin-6A. The sequence is that of Cobalt-precorrin-5B C(1)-methyltransferase from Thermoplasma acidophilum (strain ATCC 25905 / DSM 1728 / JCM 9062 / NBRC 15155 / AMRC-C165).